Here is a 131-residue protein sequence, read N- to C-terminus: Fumarate reductase subunit C (131 aa).

Transmembrane regions (helical) follow at residues 30–50, 57–77, and 109–129; these read EGTA…LFAL, WMGF…LITL, and IIKG…YVAL.

This sequence belongs to the FrdC family. Part of an enzyme complex containing four subunits: a flavoprotein (FrdA), an iron-sulfur protein (FrdB), and two hydrophobic anchor proteins (FrdC and FrdD).

The protein localises to the cell inner membrane. Its function is as follows. Two distinct, membrane-bound, FAD-containing enzymes are responsible for the catalysis of fumarate and succinate interconversion; fumarate reductase is used in anaerobic growth, and succinate dehydrogenase is used in aerobic growth. Anchors the catalytic components of the fumarate reductase complex to the cell inner membrane, binds quinones. This chain is Fumarate reductase subunit C, found in Salmonella choleraesuis (strain SC-B67).